The primary structure comprises 283 residues: Pantothenate synthetase (283 aa).

30-37 is a binding site for ATP; it reads MGNLHAGH. Residue H37 is the Proton donor of the active site. Residue Q61 coordinates (R)-pantoate. Q61 serves as a coordination point for beta-alanine. Position 149 to 152 (149 to 152) interacts with ATP; that stretch reads GEKD. Q155 contacts (R)-pantoate. ATP contacts are provided by residues L178 and 186–189; that span reads MSSR.

This sequence belongs to the pantothenate synthetase family. Homodimer.

It localises to the cytoplasm. It catalyses the reaction (R)-pantoate + beta-alanine + ATP = (R)-pantothenate + AMP + diphosphate + H(+). It functions in the pathway cofactor biosynthesis; (R)-pantothenate biosynthesis; (R)-pantothenate from (R)-pantoate and beta-alanine: step 1/1. Catalyzes the condensation of pantoate with beta-alanine in an ATP-dependent reaction via a pantoyl-adenylate intermediate. This Hahella chejuensis (strain KCTC 2396) protein is Pantothenate synthetase.